Consider the following 119-residue polypeptide: Promotilin (119 aa).

The signal sequence occupies residues Met1–Ala25. Residues Glu40–Glu72 form a disordered region.

This sequence belongs to the motilin family.

It localises to the secreted. Plays an important role in the regulation of interdigestive gastrointestinal motility and indirectly causes rhythmic contraction of duodenal and colonic smooth muscle. The protein is Promotilin (MLN) of Sus scrofa (Pig).